The chain runs to 225 residues: UPF0758 protein Sfri_3828 (225 aa).

Residues 102–224 (ILTNPDLTRD…IVSFAERGWI (123 aa)) form the MPN domain. 3 residues coordinate Zn(2+): His-173, His-175, and Asp-186. Residues 173 to 186 (HNHPSGIAEPSQAD) carry the JAMM motif motif.

This sequence belongs to the UPF0758 family.

The protein is UPF0758 protein Sfri_3828 of Shewanella frigidimarina (strain NCIMB 400).